Here is a 253-residue protein sequence, read N- to C-terminus: Triosephosphate isomerase (253 aa).

Position 8-10 (8-10) interacts with substrate; sequence NWK. His-91 serves as the catalytic Electrophile. The active-site Proton acceptor is the Glu-168. Substrate contacts are provided by residues Gly-174, Ser-213, and 234–235; that span reads GG.

Belongs to the triosephosphate isomerase family. As to quaternary structure, homodimer.

The protein resides in the cytoplasm. The catalysed reaction is D-glyceraldehyde 3-phosphate = dihydroxyacetone phosphate. The protein operates within carbohydrate biosynthesis; gluconeogenesis. It participates in carbohydrate degradation; glycolysis; D-glyceraldehyde 3-phosphate from glycerone phosphate: step 1/1. Involved in the gluconeogenesis. Catalyzes stereospecifically the conversion of dihydroxyacetone phosphate (DHAP) to D-glyceraldehyde-3-phosphate (G3P). The chain is Triosephosphate isomerase from Acidiphilium cryptum (strain JF-5).